The following is an 882-amino-acid chain: Translation initiation factor IF-2 (882 aa).

Residues 28–294 (GIRKSADDSV…SSLQQGFQKP (267 aa)) are disordered. Residues 67–81 (STLNIPGTGGKSKSV) show a composition bias toward polar residues. Residues 92–209 (VKRDPQEAER…RMAEENKWTD (118 aa)) show a composition bias toward basic and acidic residues. Residues 244–258 (GRGRNAKAARPKKGN) show a composition bias toward basic residues. A compositionally biased stretch (basic and acidic residues) spans 259–272 (KHAESKADREEARA). In terms of domain architecture, tr-type G spans 381-550 (PRAPVVTIMG…LLQAEVLELK (170 aa)). Residues 390–397 (GHVDHGKT) are G1. Residue 390–397 (GHVDHGKT) participates in GTP binding. The tract at residues 415 to 419 (GITQH) is G2. Residues 436 to 439 (DTPG) are G3. Residues 436–440 (DTPGH) and 490–493 (NKID) each bind GTP. A G4 region spans residues 490–493 (NKID). The interval 526 to 528 (SAK) is G5. N6-acetyllysine is present on lysine 800.

The protein belongs to the TRAFAC class translation factor GTPase superfamily. Classic translation factor GTPase family. IF-2 subfamily.

It is found in the cytoplasm. One of the essential components for the initiation of protein synthesis. Protects formylmethionyl-tRNA from spontaneous hydrolysis and promotes its binding to the 30S ribosomal subunits. Also involved in the hydrolysis of GTP during the formation of the 70S ribosomal complex. This is Translation initiation factor IF-2 from Shigella flexneri serotype 5b (strain 8401).